Consider the following 331-residue polypeptide: Phenylalanine--tRNA ligase alpha subunit (331 aa).

Glu252 is a Mg(2+) binding site.

Belongs to the class-II aminoacyl-tRNA synthetase family. Phe-tRNA synthetase alpha subunit type 1 subfamily. Tetramer of two alpha and two beta subunits. The cofactor is Mg(2+).

Its subcellular location is the cytoplasm. The catalysed reaction is tRNA(Phe) + L-phenylalanine + ATP = L-phenylalanyl-tRNA(Phe) + AMP + diphosphate + H(+). This chain is Phenylalanine--tRNA ligase alpha subunit, found in Xanthomonas axonopodis pv. citri (strain 306).